Consider the following 444-residue polypeptide: NADH-dependent flavin oxidoreductase nadA (444 aa).

Residues 37–40 (ERMC) and glutamine 123 contribute to the FMN site. The tract at residues 127 to 149 (PGRQTPSHRQPEPISASDVPLDT) is disordered. Residue 192 to 195 (HAAH) participates in substrate binding. 345–346 (AR) is an FMN binding site.

This sequence belongs to the NADH:flavin oxidoreductase/NADH oxidase family.

It localises to the cytoplasm. The protein localises to the cytosol. Functionally, NADH-dependent flavin oxidoreductase; part of the gene cluster that mediates the biosynthesis of aflatoxins, a group of polyketide-derived furanocoumarins, and part of the most toxic and carcinogenic compounds among the known mycotoxins. The four major aflatoxins produced by A.parasiticus are aflatoxin B1 (AFB1), aflatoxin B2 (AFB2), aflatoxin G1 (AFG1) and aflatoxin G2 (AFG2). Within the aflatoxin pathway, the NADH-dependent flavin oxidoreductase nadA is specifically required for the last steps in which OMST is converted specifically to aflatoxin G1. The biosynthesis of aflatoxins begins with the norsolorinic acid synthase aflC that combines a hexanoyl starter unit produced by the fatty acid synthase aflA/aflB and 7 malonyl-CoA extender units to synthesize the precursor NOR. The second step is the conversion of NOR to averantin and requires the norsolorinic acid ketoreductase aflD, which catalyzes the dehydration of norsolorinic acid to form (1'S)-averantin. The norsolorinic acid reductases aflE and aflF may also play a role in the conversion of NOR to AVN. The cytochrome P450 monooxygenase aflG then catalyzes the hydroxylation of AVN to 5'hydroxyaverantin (HAVN). The next step is performed by the 5'-hydroxyaverantin dehydrogenase aflH that transforms HAVN to 5'-oxoaverantin (OAVN) which is further converted to averufin (AVF) by aflK that plays a dual role in the pathway, as a 5'-oxoaverantin cyclase that mediates conversion of 5'-oxoaverantin, as well as a versicolorin B synthase in a later step in the pathway. The averufin oxidase aflI catalyzes the conversion of AVF to versiconal hemiacetal acetate (VHA). VHA is then the substrate for the versiconal hemiacetal acetate esterase aflJ to yield versiconal (VAL). Versicolorin B synthase aflK then converts VAL to versicolorin B (VERB) by closing the bisfuran ring of aflatoxin which is required for DNA-binding, thus giving to aflatoxin its activity as a mutagen. Then, the activity of the versicolorin B desaturase aflL leads to versicolorin A (VERA). A branch point starts from VERB since it can also be converted to dihydrodemethylsterigmatocystin (DMDHST), probably also by aflL, VERA being a precursor for aflatoxins B1 and G1, and DMDHST for aflatoxins B2 and G2. Next, the versicolorin reductase aflM and the cytochrome P450 monooxygenase aflN are involved in conversion of VERA to demethylsterigmatocystin (DMST). AflX and aflY seem also involved in this step, through probable aflX-mediated epoxide ring-opening step following versicolorin A oxidation and aflY-mediated Baeyer-Villiger oxidation required for the formation of the xanthone ring. The methyltransferase aflO then leads to the modification of DMST to sterigmatocystin (ST), and of DMDHST to dihydrosterigmatocystin (DHST). Both ST and DHST are then substrates of the O-methyltransferase aflP to yield O-methylsterigmatocystin (OMST) and dihydro-O-methylsterigmatocystin (DHOMST), respectively. Finally OMST is converted to aflatoxins B1 and G1, and DHOMST to aflatoxins B2 and G2, via the action of several enzymes including O-methylsterigmatocystin oxidoreductase aflQ, the cytochrome P450 monooxygenase aflU, but also the NADH-dependent flavin oxidoreductase nadA which is specifically required for the synthesis of AFG1. The chain is NADH-dependent flavin oxidoreductase nadA from Aspergillus parasiticus (strain ATCC 56775 / NRRL 5862 / SRRC 143 / SU-1).